A 407-amino-acid chain; its full sequence is Aurofusarin biosynthesis cluster protein S (407 aa).

The N-terminal stretch at 1 to 35 (MSKQKPSLWRALRALSFIISIPLLIQYLVLKWYST) is a signal peptide. N-linked (GlcNAc...) asparagine glycans are attached at residues Asn52, Asn174, Asn196, Asn274, and Asn312. FAS1 domains lie at 52–192 (NLTV…DTVL) and 195–365 (PNST…DSIL).

As to quaternary structure, might be part of an extracellular enzyme complex composed of GIP1, aurF, aurO and aurS.

It localises to the secreted. It is found in the extracellular space. The protein operates within pigment biosynthesis. Functionally, part of the gene cluster that mediates the biosynthesis of aurofusarin, a red mycelium pigment which is acting as a mycotoxin. The first step is performed by the polyketide synthase which condenses one acetyl-CoA and 6 malonyl-CoA units to form the first intermediate, the cyclic heptaketide and yellow pigment YWA1. The C2 hydroxyl group in the pyrone ring of YWA1 is probably formed during ring closure by an aldol-type cyclization reaction. The dehydratase aurZ then acts as the first tailoring enzyme in the aurofusarin biosynthetic pathway by converting YWA1 to nor-rubrofusarin. Nor-rubrofusarin is then methylated to rubrofusarin by the O-methyltransferase aurJ. Rubrofusarin is then transported across the plasma membrane by the rubrofusarin-specific pump aurT for further enzymatic processing by the extracellular complex composed of GIP1, aurF, aurO and aurS to yield aurofusarin. The sequence is that of Aurofusarin biosynthesis cluster protein S from Gibberella zeae (strain ATCC MYA-4620 / CBS 123657 / FGSC 9075 / NRRL 31084 / PH-1) (Wheat head blight fungus).